The primary structure comprises 121 residues: Small ribosomal subunit protein uS13 (121 aa).

The interval 92-121 (RKGLPVRGQSSKTNARTVKGPRKTVANKKK) is disordered. Basic residues predominate over residues 110–121 (KGPRKTVANKKK).

The protein belongs to the universal ribosomal protein uS13 family. Part of the 30S ribosomal subunit. Forms a loose heterodimer with protein S19. Forms two bridges to the 50S subunit in the 70S ribosome.

Functionally, located at the top of the head of the 30S subunit, it contacts several helices of the 16S rRNA. In the 70S ribosome it contacts the 23S rRNA (bridge B1a) and protein L5 of the 50S subunit (bridge B1b), connecting the 2 subunits; these bridges are implicated in subunit movement. Contacts the tRNAs in the A and P-sites. The protein is Small ribosomal subunit protein uS13 of Mycoplasma capricolum subsp. capricolum (strain California kid / ATCC 27343 / NCTC 10154).